The chain runs to 176 residues: Epididymal-specific lipocalin-9 (176 aa).

An N-terminal signal peptide occupies residues 1–15 (MALLLLSLGLSLIAA). N-linked (GlcNAc...) asparagine glycans are attached at residues Asn68 and Asn129. The cysteines at positions 83 and 161 are disulfide-linked.

This sequence belongs to the calycin superfamily. Lipocalin family.

The protein resides in the secreted. The protein is Epididymal-specific lipocalin-9 of Homo sapiens (Human).